Here is a 148-residue protein sequence, read N- to C-terminus: Ubiquitin-conjugating enzyme E2 10 (148 aa).

The UBC core domain occupies 1–147 (MASKRILKEL…ARSWTQKYAM (147 aa)). The Glycyl thioester intermediate role is filled by cysteine 85.

The protein belongs to the ubiquitin-conjugating enzyme family. As to quaternary structure, interacts with CHIP and the E3 ubiquitin ligase BB. Associates with the E3 ubiquitin ligase JMJ24. As to expression, ubiquitously expressed with the highest levels in rosette leaves, roots and petals.

It catalyses the reaction S-ubiquitinyl-[E1 ubiquitin-activating enzyme]-L-cysteine + [E2 ubiquitin-conjugating enzyme]-L-cysteine = [E1 ubiquitin-activating enzyme]-L-cysteine + S-ubiquitinyl-[E2 ubiquitin-conjugating enzyme]-L-cysteine.. It participates in protein modification; protein ubiquitination. Functionally, accepts the ubiquitin from the E1 complex and catalyzes its covalent attachment to other proteins. Mediates the selective degradation of short-lived and abnormal proteins. This Arabidopsis thaliana (Mouse-ear cress) protein is Ubiquitin-conjugating enzyme E2 10.